A 113-amino-acid chain; its full sequence is Replication initiation control protein YabA (113 aa).

4 residues coordinate Zn(2+): His-86, Cys-88, Cys-102, and Cys-105.

Belongs to the YabA family. As to quaternary structure, homotetramer. Interacts with both DnaA and DnaN, acting as a bridge between these two proteins. The cofactor is Zn(2+).

It is found in the cytoplasm. Its subcellular location is the nucleoid. Involved in control of chromosome replication initiation. Inhibits the cooperative binding of DnaA to the oriC region, thus negatively regulating initiation of chromosome replication. Inhibits the ability of DnaA-ATP to form a helix on DNA; does not disassemble preformed DnaA-DNA helices. Decreases the residence time of DnaA on the chromosome at its binding sites (oriC, replication forks and promoter-binding sites). Tethers DnaA to the replication machinery via the DNA polymerase beta sliding clamp subunit (dnaN). Associates with oriC and other DnaA targets on the chromosome in a DnaA-dependent manner. The sequence is that of Replication initiation control protein YabA from Pediococcus pentosaceus (strain ATCC 25745 / CCUG 21536 / LMG 10740 / 183-1w).